We begin with the raw amino-acid sequence, 165 residues long: Putative defense protein Hdd11 (165 aa).

The N-terminal stretch at 1–17 (MWATYVFIAVSLACANG) is a signal peptide. A Reelin domain is found at 18–165 (YSSGAPESVC…VESGPVKVIS (148 aa)). Cysteine 27 and cysteine 104 are disulfide-bonded.

Belongs to the insect defense protein family.

The protein resides in the secreted. As this protein is expressed upon bacterial infection, it may have antimicrobial activity. This chain is Putative defense protein Hdd11, found in Hyphantria cunea (Fall webworm moth).